We begin with the raw amino-acid sequence, 64 residues long: Conotoxin Vc1.3 (64 aa).

The first 21 residues, 1 to 21, serve as a signal peptide directing secretion; sequence MGMRMMFTVFLLVVLATTVVS. Positions 22–43 are excised as a propeptide; it reads FTSDRASDGRKAAASDLITLTI. Intrachain disulfides connect C46–C52 and C47–C60. C60 bears the Cysteine amide mark.

Belongs to the conotoxin A superfamily. As to expression, expressed by the venom duct.

The protein localises to the secreted. Its function is as follows. May act as a toxin. In Conus victoriae (Queen Victoria cone), this protein is Conotoxin Vc1.3.